We begin with the raw amino-acid sequence, 312 residues long: Aspartate carbamoyltransferase catalytic subunit (312 aa).

2 residues coordinate carbamoyl phosphate: R62 and T63. K90 serves as a coordination point for L-aspartate. Carbamoyl phosphate-binding residues include R112, H140, and Q143. Residues R173 and R228 each contribute to the L-aspartate site. Positions 269 and 270 each coordinate carbamoyl phosphate.

The protein belongs to the aspartate/ornithine carbamoyltransferase superfamily. ATCase family. As to quaternary structure, heterododecamer (2C3:3R2) of six catalytic PyrB chains organized as two trimers (C3), and six regulatory PyrI chains organized as three dimers (R2).

The catalysed reaction is carbamoyl phosphate + L-aspartate = N-carbamoyl-L-aspartate + phosphate + H(+). It participates in pyrimidine metabolism; UMP biosynthesis via de novo pathway; (S)-dihydroorotate from bicarbonate: step 2/3. Catalyzes the condensation of carbamoyl phosphate and aspartate to form carbamoyl aspartate and inorganic phosphate, the committed step in the de novo pyrimidine nucleotide biosynthesis pathway. This is Aspartate carbamoyltransferase catalytic subunit from Deinococcus geothermalis (strain DSM 11300 / CIP 105573 / AG-3a).